We begin with the raw amino-acid sequence, 557 residues long: Hepatocyte nuclear factor 1-beta (557 aa).

Residues 1–31 (MVSKLTSLQQELLSALLSSGVTKEVLIQALE) form a dimerization region. In terms of domain architecture, HNF-p1 spans 1–32 (MVSKLTSLQQELLSALLSSGVTKEVLIQALEE). 4 positions are modified to phosphoserine: Ser-49, Ser-52, Ser-75, and Ser-80. The interval 66-85 (TNGHAKGRLSGDEGSEDGDD) is disordered. Residues 93 to 188 (KELQALNTEE…ILRQFNQTVQ (96 aa)) enclose the POU-specific atypical domain. The segment at residues 231–311 (MRRNRFKWGP…NRRKEEAFRQ (81 aa)) is a DNA-binding region (homeobox; HNF1-type). The disordered stretch occupies residues 324–370 (HNLNPLLTHGSPHHQPSSSPPNKLSGVRYSQPGNNEVTSSSTISHHG). Residues 354–370 (QPGNNEVTSSSTISHHG) are compositionally biased toward polar residues.

Belongs to the HNF1 homeobox family. As to quaternary structure, binds DNA as a dimer. Can form homodimer or heterodimer with HNF1-alpha. Interacts (via HNF-p1 domain) with PCBD1; the interaction increases its transactivation activity. In terms of tissue distribution, liver, kidney and intestine.

It localises to the nucleus. Functionally, transcription factor that binds to the inverted palindrome 5'-GTTAATNATTAAC-3'. Binds to the FPC element in the cAMP regulatory unit of the PLAU gene. Transcriptional activity is increased by coactivator PCBD1. The protein is Hepatocyte nuclear factor 1-beta (Hnf1b) of Rattus norvegicus (Rat).